The chain runs to 61 residues: Temporin-ALi (61 aa).

The first 22 residues, 1-22 (MFPLKKSLLLLFFLATINLSLC), serve as a signal peptide directing secretion. A propeptide spanning residues 23–46 (EQERNAEEERRDEPDERNAEVEKR) is cleaved from the precursor. Leucine 59 is subject to Leucine amide.

It belongs to the frog skin active peptide (FSAP) family. Temporin subfamily. In terms of tissue distribution, expressed by the skin glands.

The protein localises to the secreted. Antimicrobial peptide with activity against Gram-positive and Gram-negative bacteria and against fungi. Has been tested against S.aureus (MIC=7.5 ug/mL), B.pumilus (MIC=7.5 ug/mL), B.cereus (MIC=75.0 ug/mL), E.coli (MIC=7.5 ug/mL), B.dysenteriae (MIC=20.0 ug/mL), A.cacoaceticus (MIC=60.0 ug/mL), P.aeruginosa (MIC=5.0 ug/mL) and C.albicans (MIC=5.0 ug/mL). Also shows a weak hemolytic activity. This is Temporin-ALi from Amolops loloensis (Lolokou Sucker Frog).